A 666-amino-acid chain; its full sequence is UvrABC system protein B (666 aa).

One can recognise a Helicase ATP-binding domain in the interval glutamate 25 to arginine 412. Glycine 38–threonine 45 contributes to the ATP binding site. Residues tyrosine 91–isoleucine 114 carry the Beta-hairpin motif. Residues glutamine 429–isoleucine 595 form the Helicase C-terminal domain. The UVR domain occupies proline 626 to arginine 661.

It belongs to the UvrB family. In terms of assembly, forms a heterotetramer with UvrA during the search for lesions. Interacts with UvrC in an incision complex.

It localises to the cytoplasm. In terms of biological role, the UvrABC repair system catalyzes the recognition and processing of DNA lesions. A damage recognition complex composed of 2 UvrA and 2 UvrB subunits scans DNA for abnormalities. Upon binding of the UvrA(2)B(2) complex to a putative damaged site, the DNA wraps around one UvrB monomer. DNA wrap is dependent on ATP binding by UvrB and probably causes local melting of the DNA helix, facilitating insertion of UvrB beta-hairpin between the DNA strands. Then UvrB probes one DNA strand for the presence of a lesion. If a lesion is found the UvrA subunits dissociate and the UvrB-DNA preincision complex is formed. This complex is subsequently bound by UvrC and the second UvrB is released. If no lesion is found, the DNA wraps around the other UvrB subunit that will check the other stand for damage. This is UvrABC system protein B from Synechococcus sp. (strain ATCC 27144 / PCC 6301 / SAUG 1402/1) (Anacystis nidulans).